The chain runs to 364 residues: MSLNVPSRRLLKSAPSSANALVPALQSLSINTRSIHTTPSQQWSLFGWGKQKVEERNKVKEELKQSELARTRKPTQEEIFERVRGRLEGDSIFADTTPSSQLAAEQDKHKDWATASAEKKLAAAHAKDQTPTGISLKKDHLVRVVDPDPRSRVRWERKMVIRKLQRGTDPWSVEPKAERIARTERKLVYKTGYLPTSVKKLVHLSRQIRGKTVSEALVQMQFSKKKMAKEVKTELLRAEAKAIVTRGMGLGKAAAAAAQKETGAEPVKIQTKDGKHLEIRDPTRIYVAETFVNKGFTRGVELDYRARGRVFKMNKPTTTMTVVLKEEKTRIREHQERVAKKLRQGPWVHLPDRPVTSQRQFYSW.

It belongs to the universal ribosomal protein uL22 family. In terms of assembly, component of the mitochondrial large ribosomal subunit (mt-LSU). Mature N.crassa 74S mitochondrial ribosomes consist of a small (37S) and a large (54S) subunit. The 37S small subunit contains a 16S ribosomal RNA (16S mt-rRNA) and 32 different proteins. The 54S large subunit contains a 23S rRNA (23S mt-rRNA) and 42 different proteins. uL22m forms the wall of the exit tunnel.

The protein localises to the mitochondrion. Functionally, component of the mitochondrial ribosome (mitoribosome), a dedicated translation machinery responsible for the synthesis of mitochondrial genome-encoded proteins, including at least some of the essential transmembrane subunits of the mitochondrial respiratory chain. The mitoribosomes are attached to the mitochondrial inner membrane and translation products are cotranslationally integrated into the membrane. This chain is Large ribosomal subunit protein uL22m (mrpl22), found in Neurospora crassa (strain ATCC 24698 / 74-OR23-1A / CBS 708.71 / DSM 1257 / FGSC 987).